The following is a 417-amino-acid chain: Tyrosine--tRNA ligase (417 aa).

Tyr34 provides a ligand contact to L-tyrosine. The short motif at 39–48 is the 'HIGH' region element; the sequence is PTGDSMHIGH. Tyr165 and Gln169 together coordinate L-tyrosine. The 'KMSKS' region motif lies at 227 to 231; the sequence is KFGKS. Lys230 contributes to the ATP binding site. Positions 349–417 constitute an S4 RNA-binding domain; that stretch reads ENIVLWLVDT…KKKYFLARVK (69 aa).

Belongs to the class-I aminoacyl-tRNA synthetase family. TyrS type 1 subfamily. As to quaternary structure, homodimer.

It localises to the cytoplasm. The enzyme catalyses tRNA(Tyr) + L-tyrosine + ATP = L-tyrosyl-tRNA(Tyr) + AMP + diphosphate + H(+). In terms of biological role, catalyzes the attachment of tyrosine to tRNA(Tyr) in a two-step reaction: tyrosine is first activated by ATP to form Tyr-AMP and then transferred to the acceptor end of tRNA(Tyr). The chain is Tyrosine--tRNA ligase from Pediococcus pentosaceus (strain ATCC 25745 / CCUG 21536 / LMG 10740 / 183-1w).